The sequence spans 322 residues: Mas-related G-protein coupled receptor member X1 (322 aa).

Topologically, residues 1 to 31 are extracellular; sequence MDPTISTLDTELTPINGTEETLCYKQTLSLT. An N-linked (GlcNAc...) asparagine glycan is attached at Asn-16. The chain crosses the membrane as a helical span at residues 32–52; sequence VLTCIVSLVGLTGNAVVLWLL. At 53 to 67 the chain is on the cytoplasmic side; sequence GCRMRRNAFSIYILN. The helical transmembrane segment at 68–88 threads the bilayer; it reads LAAADFLFLSGRLIYSLLSFI. At 89 to 96 the chain is on the extracellular side; sequence SIPHTISK. The helical transmembrane segment at 97–117 threads the bilayer; that stretch reads ILYPVMMFSYFAGLSFLSAVS. Residues 118–144 lie on the Cytoplasmic side of the membrane; sequence TERCLSVLWPIWYRCHRPTHLSAVVCV. The helical transmembrane segment at 145 to 165 threads the bilayer; the sequence is LLWALSLLRSILEWMLCGFLF. The Extracellular segment spans residues 166–177; the sequence is SGADSAWCQTSD. A helical transmembrane segment spans residues 178-198; it reads FITVAWLIFLCVVLCGSSLVL. The Cytoplasmic segment spans residues 199-221; sequence LIRILCGSRKIPLTRLYVTILLT. Residues 222–242 form a helical membrane-spanning segment; sequence VLVFLLCGLPFGIQFFLFLWI. Topologically, residues 243–254 are extracellular; that stretch reads HVDREVLFCHVH. The chain crosses the membrane as a helical span at residues 255–275; sequence LVSIFLSALNSSANPIIYFFV. Residues 276–322 lie on the Cytoplasmic side of the membrane; it reads GSFRQRQNRQNLKLVLQRALQDASEVDEGGGQLPEEILELSGSRLEQ.

It belongs to the G-protein coupled receptor 1 family. Mas subfamily. Uniquely localized in a subset of small dorsal root and trigeminal sensory neurons.

It localises to the cell membrane. In terms of biological role, orphan receptor. Probably involved in the function of nociceptive neurons. May regulate nociceptor function and/or development, including the sensation or modulation of pain. Potently activated by enkephalins including BAM22 (bovine adrenal medulla peptide 22) and BAM (8-22). BAM22 is the most potent compound and evoked a large and dose-dependent release of intracellular calcium in stably transfected cells. G(alpha)q proteins are involved in the calcium-signaling pathway. Activated by the antimalarial drug, chloroquine. May mediate chloroquine-induced itch, in a histamine-independent manner. This is Mas-related G-protein coupled receptor member X1 (MRGPRX1) from Homo sapiens (Human).